Reading from the N-terminus, the 147-residue chain is Large ribosomal subunit protein uL13 (147 aa).

This sequence belongs to the universal ribosomal protein uL13 family. As to quaternary structure, part of the 50S ribosomal subunit.

In terms of biological role, this protein is one of the early assembly proteins of the 50S ribosomal subunit, although it is not seen to bind rRNA by itself. It is important during the early stages of 50S assembly. The chain is Large ribosomal subunit protein uL13 from Corynebacterium diphtheriae (strain ATCC 700971 / NCTC 13129 / Biotype gravis).